The following is a 275-amino-acid chain: MLLLLSAVAFVSATAVQSGVVSQPTTPIPILPGQPMGGMANGCTNKKLDGVEIMRRNMVECQKRNAEATKAMVERANEKAVETFNKEVSKGPQKESGQCIEKAVQGTDRCILAGIIDKAVNKRKYRISDVENSTSLYRGDKLIALIVNVDYGLQPIIKPKKKKSKIMANLPQPKREMYFNQIGQLVGAKGTFPQDNKDECKPCEPKKTVETASERCNLGCELKGTSALISKAIQKKEIKESPKEGDRNTTQEYDGEGSAEDAEGQQPSADGEGLE.

An N-terminal signal peptide occupies residues 1–18 (MLLLLSAVAFVSATAVQS). 2 N-linked (GlcNAc...) asparagine glycosylation sites follow: N132 and N248. Residues 233-275 (IQKKEIKESPKEGDRNTTQEYDGEGSAEDAEGQQPSADGEGLE) are disordered. Residues 234–249 (QKKEIKESPKEGDRNT) show a composition bias toward basic and acidic residues. The span at 253 to 263 (YDGEGSAEDAE) shows a compositional bias: acidic residues.

It is found in the spore polar tube. In terms of biological role, involved in formation of a polar tube through which the infectious agent is passed on to the host cell. This is Polar tube protein 2 (PTP2) from Encephalitozoon intestinalis (Microsporidian parasite).